A 397-amino-acid polypeptide reads, in one-letter code: MAFRTLDDIGDVKGKRVLVREDLNVPMDGDRVTDDTRLRAAIPTVNELAEKGAKVLILAHFGRPKGQPNPEMSLARIKDALAGVLGRPVHFINDIKGEAAAKAVDALNPGAVALLENTRFYAGEEKNDPALAAEVAKLGDFYVNDAFSAAHRAHVSTEGLAHKLPAFAGRAMQKELEALEAALGKPTHPVAAVVGGAKVSTKLDVLTNLVSKVDHLIIGGGMANTFLAAQGVDVGKSLCEHELKDTVKGIFAAAEKTGCKIHLPSDVVVAKEFKANPPIRTIPVSDVAADEMILDVGPKAVAALTEVLKASKTLVWNGPLGAFEIEPFDKATVALAKEAAALTKAGSLISVAGGGDTVAALNHAGVAKDFSFVSTAGGAFLEWMEGKELPGVKALEA.

Substrate contacts are provided by residues 22-24, R37, 60-63, R119, and R152; these read DLN and HFGR. ATP-binding positions include K202, E324, and 354 to 357; that span reads GGDT.

This sequence belongs to the phosphoglycerate kinase family. As to quaternary structure, monomer.

It localises to the cytoplasm. The catalysed reaction is (2R)-3-phosphoglycerate + ATP = (2R)-3-phospho-glyceroyl phosphate + ADP. The protein operates within carbohydrate degradation; glycolysis; pyruvate from D-glyceraldehyde 3-phosphate: step 2/5. The sequence is that of Phosphoglycerate kinase (pgk) from Zymomonas mobilis subsp. mobilis (strain ATCC 31821 / ZM4 / CP4).